The primary structure comprises 152 residues: UPF0225 protein KPK_2103 (152 aa).

It belongs to the UPF0225 family.

This chain is UPF0225 protein KPK_2103, found in Klebsiella pneumoniae (strain 342).